A 339-amino-acid polypeptide reads, in one-letter code: MNYIKFDEKKPLDVIPIGRVTIDFNPNEINRPLEESRTFTKYLGGSPGNIAVGLARLGKKVGFLSTVSDDQFGNFVVNYLKNEGIDISQINRAKNGEKLGLTFTEILSPKESSILMYRKGIADLQLSSKEVSEDYIKSAKAIVISGTALSKSPSREAAFVALEYAKKHNTRIIFDLDYREYTWNCKEEIAIYYSLAARMSDVIMGSREEFNLMEGLISPEESNDKETAERWIGYGNKIVVIKHGKDGSTAYLHDGTSYKIKPFPVKLLKSFGGGDAYASAFIYGIMEGWDVIDALEFGSASAAMLVASHSCSEAMPKVEEIKQFIKEKKEEHGEMVVRG.

It belongs to the carbohydrate kinase PfkB family.

The enzyme catalyses 5-dehydro-2-deoxy-D-gluconate + ATP = 6-phospho-5-dehydro-2-deoxy-D-gluconate + ADP + H(+). It functions in the pathway polyol metabolism; myo-inositol degradation into acetyl-CoA; acetyl-CoA from myo-inositol: step 5/7. Catalyzes the phosphorylation of 5-dehydro-2-deoxy-D-gluconate (2-deoxy-5-keto-D-gluconate or DKG) to 6-phospho-5-dehydro-2-deoxy-D-gluconate (DKGP). This Clostridium tetani (strain Massachusetts / E88) protein is 5-dehydro-2-deoxygluconokinase.